Consider the following 307-residue polypeptide: Membrane protein insertase YidC 2 (307 aa).

The N-terminal stretch at 1–23 is a signal peptide; that stretch reads MKLTLNRILFSGLALSILLTLTG. Residue C24 is the site of N-palmitoyl cysteine attachment. A lipid anchor (S-diacylglycerol cysteine) is attached at C24. A run of 5 helical transmembrane segments spans residues 58–78, 135–155, 179–199, 209–225, and 231–251; these read LGYGLAIIIVTIIVRTLILPL, LGGIGCLPLLIQMPFFSAMYF, VLTAIIAALYFFQSWLSMMAV, TMMYTMPIMMIFMSFSL, and LYWLVGGFFSIIQQLITTYLL. The interval 263 to 307 is disordered; it reads YAKNPPKAYQSTSSRKDVTPSQNMEQANLPKKIKSNRNAGKQRKR. Over residues 271–288 the composition is skewed to polar residues; the sequence is YQSTSSRKDVTPSQNMEQ. The span at 293-307 shows a compositional bias: basic residues; the sequence is KKIKSNRNAGKQRKR.

This sequence belongs to the OXA1/ALB3/YidC family. Type 2 subfamily.

It localises to the cell membrane. Its function is as follows. Required for the insertion and/or proper folding and/or complex formation of integral membrane proteins into the membrane. Involved in integration of membrane proteins that insert both dependently and independently of the Sec translocase complex, as well as at least some lipoproteins. This Streptococcus pyogenes serotype M1 protein is Membrane protein insertase YidC 2.